We begin with the raw amino-acid sequence, 49 residues long: Osteocalcin (49 aa).

A Gla domain is found at 1-47 (YLDHGLGAPAPYVDPLEPKREVCELNPDCDELADQMGFQEAYRRFYG). Proline 9 bears the 4-hydroxyproline mark. Residues glutamate 17, glutamate 21, glutamate 24, and aspartate 30 each contribute to the Ca(2+) site. Glutamate 17, glutamate 21, and glutamate 24 each carry 4-carboxyglutamate. Residues cysteine 23 and cysteine 29 are joined by a disulfide bond.

This sequence belongs to the osteocalcin/matrix Gla protein family. In terms of processing, gamma-carboxyglutamic acid residues are formed by vitamin K dependent carboxylation. These residues are essential for the binding of calcium.

It localises to the secreted. In terms of biological role, the carboxylated form is one of the main organic components of the bone matrix, which constitutes 1-2% of the total bone protein: it acts as a negative regulator of bone formation and is required to limit bone formation without impairing bone resorption or mineralization. The carboxylated form binds strongly to apatite and calcium. Its function is as follows. The uncarboxylated form acts as a hormone secreted by osteoblasts, which regulates different cellular processes, such as energy metabolism, male fertility and brain development. Regulates of energy metabolism by acting as a hormone favoring pancreatic beta-cell proliferation, insulin secretion and sensitivity and energy expenditure. Uncarboxylated osteocalcin hormone also promotes testosterone production in the testes: acts as a ligand for G protein-coupled receptor GPRC6A at the surface of Leydig cells, initiating a signaling response that promotes the expression of enzymes required for testosterone synthesis in a CREB-dependent manner. Also acts as a regulator of brain development: osteocalcin hormone crosses the blood-brain barrier and acts as a ligand for GPR158 on neurons, initiating a signaling response that prevents neuronal apoptosis in the hippocampus, favors the synthesis of all monoamine neurotransmitters and inhibits that of gamma-aminobutyric acid (GABA). Osteocalcin also crosses the placenta during pregnancy and maternal osteocalcin is required for fetal brain development. In Lama guanicoe (Guanaco), this protein is Osteocalcin.